The primary structure comprises 196 residues: Large ribosomal subunit protein bL17 (196 aa).

The tract at residues 133 to 196 is disordered; it reads AAKRDADKKE…KPAAEEKDAK (64 aa). Over residues 134–143 the composition is skewed to basic and acidic residues; sequence AKRDADKKEA. A compositionally biased stretch (acidic residues) spans 152-164; it reads EVAETEAAPEAEA. A compositionally biased stretch (basic and acidic residues) spans 184 to 196; sequence AAEKPAAEEKDAK.

It belongs to the bacterial ribosomal protein bL17 family. In terms of assembly, part of the 50S ribosomal subunit. Contacts protein L32.

This is Large ribosomal subunit protein bL17 from Arthrobacter sp. (strain FB24).